A 76-amino-acid polypeptide reads, in one-letter code: Zinc finger protein 706 (76 aa).

The span at 1-13 (MARGQQKIQSQQK) shows a compositional bias: low complexity. Disordered regions lie at residues 1–32 (MARG…QKAA) and 53–76 (TFKQ…DVQA). Composition is skewed to basic and acidic residues over residues 17 to 31 (KQAE…DQKA) and 53 to 62 (TFKQHFESKH). The C2H2-type zinc-finger motif lies at 39–62 (YTCTVCRTQMPDPKTFKQHFESKH).

The protein localises to the cytoplasm. Its subcellular location is the nucleus. Transcription repressor involved in the exit of embryonic stem cells (ESCs) from self-renewal. The protein is Zinc finger protein 706 of Gallus gallus (Chicken).